A 369-amino-acid chain; its full sequence is GTPase Obg (369 aa).

One can recognise an Obg domain in the interval 1–159 (MKFIDEAKIE…RELRLELKVL (159 aa)). Residues 128 to 148 (IHFKSSTNRAPRQKSEGKEGE) are disordered. Positions 160-333 (ADIGLLGMPN…LVTEIYEYIA (174 aa)) constitute an OBG-type G domain. Residues 166 to 173 (GMPNAGKS), 191 to 195 (FTTLH), 213 to 216 (DIPG), 283 to 286 (NKLD), and 314 to 316 (SAL) contribute to the GTP site. Mg(2+)-binding residues include serine 173 and threonine 193.

It belongs to the TRAFAC class OBG-HflX-like GTPase superfamily. OBG GTPase family. As to quaternary structure, monomer. The cofactor is Mg(2+).

It is found in the cytoplasm. Its function is as follows. An essential GTPase which binds GTP, GDP and possibly (p)ppGpp with moderate affinity, with high nucleotide exchange rates and a fairly low GTP hydrolysis rate. Plays a role in control of the cell cycle, stress response, ribosome biogenesis and in those bacteria that undergo differentiation, in morphogenesis control. In Janthinobacterium sp. (strain Marseille) (Minibacterium massiliensis), this protein is GTPase Obg.